Consider the following 1748-residue polypeptide: RANBP2-like and GRIP domain-containing protein 1 (1748 aa).

Threonine 14 bears the Phosphothreonine mark. TPR repeat units lie at residues 51–84, 575–608, and 639–672; these read PRAH…NPPQ, QKMG…LKII, and EDAH…VSYW. The disordered stretch occupies residues 751-796; sequence GPLYKNGSLRNADSEIKHSTPSPTKYSLSPSKSYKYSPKTPPRWAE. Positions 769–788 are enriched in low complexity; sequence STPSPTKYSLSPSKSYKYSP. The RanBD1 1 domain maps to 1021-1157; sequence HFEPVVQMPE…FEECQRLLLD (137 aa). Disordered regions lie at residues 1198–1233 and 1291–1316; these read TKVT…TLEW and AKLN…ERDG. Polar residues predominate over residues 1220-1229; sequence IKPNPENTGP. Acidic residues predominate over residues 1302 to 1314; that stretch reads TDEESDVTQEEER. Residues 1318 to 1454 enclose the RanBD1 2 domain; it reads YFEPVVPLPD…FDEAKTAQEK (137 aa). Residues 1565 to 1578 show a composition bias toward polar residues; that stretch reads NDSETSSVAQSGSE. The segment at 1565–1606 is disordered; that stretch reads NDSETSSVAQSGSESKVEPKKCELSKNSDIEQSSDSKVKNLS. The segment covering 1579–1602 has biased composition (basic and acidic residues); it reads SKVEPKKCELSKNSDIEQSSDSKV. Residues 1685 to 1735 enclose the GRIP domain; that stretch reads QEESAANVEHLKNVLLQFIFLKPGSERESLLPVINTMLQLSPEEKGKLAAV.

This is RANBP2-like and GRIP domain-containing protein 1 (RGPD1) from Homo sapiens (Human).